The primary structure comprises 385 residues: Deoxyguanosinetriphosphate triphosphohydrolase-like protein (385 aa).

Positions 75–197 constitute an HD domain; sequence RLTHTLEVGQ…VDAADALAYT (123 aa).

This sequence belongs to the dGTPase family. Type 2 subfamily.

The polypeptide is Deoxyguanosinetriphosphate triphosphohydrolase-like protein (Deinococcus geothermalis (strain DSM 11300 / CIP 105573 / AG-3a)).